Consider the following 268-residue polypeptide: MGSADDQASRMREGTVEVVGAGEAGRARDRSPSGSARGRGGVRTALRARLAAGLADAGFDLEDVTVTRAGSRSVVRVVVDRDGGVDLDAVADASRLASELLDAAETDGQGLVAGPYVLEVTSPGVERPLTEPRHWRRAIGRLVTVRDRDGIVLAGRVLSADESGADLAVATDPARPGRPPRRRLARVTFAQVARATVEVEFSAEAYDDLSIESVETPSLSAVLVEPGETADLGYGEPDDDLPAAPGRESNDDGREAGPRGAAGKEMTR.

Disordered stretches follow at residues 1-41 (MGSA…GRGG) and 223-268 (LVEP…EMTR). Low complexity predominate over residues 32–41 (PSGSARGRGG). A compositionally biased stretch (basic and acidic residues) spans 248–257 (ESNDDGREAG).

The protein belongs to the RimP family.

It is found in the cytoplasm. Required for maturation of 30S ribosomal subunits. In Frankia casuarinae (strain DSM 45818 / CECT 9043 / HFP020203 / CcI3), this protein is Ribosome maturation factor RimP.